The sequence spans 135 residues: Protein NrdI (135 aa).

It belongs to the NrdI family.

Its function is as follows. Probably involved in ribonucleotide reductase function. This chain is Protein NrdI, found in Rhizobium johnstonii (strain DSM 114642 / LMG 32736 / 3841) (Rhizobium leguminosarum bv. viciae).